Consider the following 443-residue polypeptide: MREIVHLQAGQCGNQIGAKFWEVISDEHGIDPTGSYHGDSDLQLERINVYYNEATGNKFVPRAILVDLEPGTMDSVRSGPFGQIFRPDNFVFGQSGAGNNWAKGHYTEGAELVDSVLDVVRKESESCDCLQGFQLTHSLGGGTGSGMGTLLISKIREEYPDRIMNTFSVMPSPKVSDTVVEPYNATLSVHQLVENTDETYCIDNEALYDICFRTLKLTTPTYGDLNHLVSATMSGVTTCLRFPGQLNADLRKLAVNMVPFPRLHFFMPGFAPLTSRGSQQYRALTVPELTQQMFDSKNMMAACDPRHGRYLTVAAIFRGRMSMKEVDEQMLNVQNKSSSYFVEWIPNNVKTAVCDIPPRGLKMSATFIGNSTAIQELFKRISEQFTAMFRRKAFLHWYTGEGMDEMEFTEAESNMNDLVSEYQQYQDATADEQGEFEEEEDEA.

An MREI motif motif is present at residues 1–4; it reads MREI. GTP is bound by residues glutamine 11, glutamate 69, serine 138, glycine 142, threonine 143, glycine 144, asparagine 204, and asparagine 226. Glutamate 69 provides a ligand contact to Mg(2+). Position 438 is a 5-glutamyl polyglutamate (glutamate 438).

The protein belongs to the tubulin family. In terms of assembly, dimer of alpha and beta chains. A typical microtubule is a hollow water-filled tube with an outer diameter of 25 nm and an inner diameter of 15 nM. Alpha-beta heterodimers associate head-to-tail to form protofilaments running lengthwise along the microtubule wall with the beta-tubulin subunit facing the microtubule plus end conferring a structural polarity. Microtubules usually have 13 protofilaments but different protofilament numbers can be found in some organisms and specialized cells. It depends on Mg(2+) as a cofactor. Post-translationally, some glutamate residues at the C-terminus are polyglycylated, resulting in polyglycine chains on the gamma-carboxyl group. Glycylation is mainly limited to tubulin incorporated into axonemes (cilia and flagella) whereas glutamylation is prevalent in neuronal cells, centrioles, axonemes, and the mitotic spindle. Both modifications can coexist on the same protein on adjacent residues, and lowering polyglycylation levels increases polyglutamylation, and reciprocally. The precise function of polyglycylation is still unclear. Some glutamate residues at the C-terminus are polyglutamylated, resulting in polyglutamate chains on the gamma-carboxyl group. Polyglutamylation plays a key role in microtubule severing by spastin (SPAST). SPAST preferentially recognizes and acts on microtubules decorated with short polyglutamate tails: severing activity by SPAST increases as the number of glutamates per tubulin rises from one to eight, but decreases beyond this glutamylation threshold. As to expression, nervous system specific.

It is found in the cytoplasm. Its subcellular location is the cytoskeleton. In terms of biological role, tubulin is the major constituent of microtubules, a cylinder consisting of laterally associated linear protofilaments composed of alpha- and beta-tubulin heterodimers. Microtubules grow by the addition of GTP-tubulin dimers to the microtubule end, where a stabilizing cap forms. Below the cap, tubulin dimers are in GDP-bound state, owing to GTPase activity of alpha-tubulin. In Xenopus laevis (African clawed frog), this protein is Tubulin beta-2 chain (tubb2).